We begin with the raw amino-acid sequence, 2715 residues long: Teneurin-3 (2715 aa).

2 disordered regions span residues 1 to 38 and 142 to 223; these read MDVKERRPYCSLTKSRREKERRYTNSSADNEECRVPTQ and GRSS…AALP. The 309-residue stretch at 1–309 folds into the Teneurin N-terminal domain; that stretch reads MDVKERRPYC…KSSKYCSWRC (309 aa). The Cytoplasmic segment spans residues 1 to 310; sequence MDVKERRPYC…SSKYCSWRCT (310 aa). Residues 142–153 show a composition bias toward low complexity; sequence GRSSCLSSRSNS. Residues 159–168 are compositionally biased toward basic and acidic residues; that stretch reads DTEHENRSDS. The segment covering 171–182 has biased composition (polar residues); it reads EQPSNNPGQPTL. The segment covering 201 to 213 has biased composition (low complexity); sequence TSLNRNSLTNRRN. Residues 311–331 traverse the membrane as a helical segment; it reads ALCAVGVSVLLAILLSYFIAM. The Extracellular portion of the chain corresponds to 332–2715; that stretch reads HLFGLNWHLQ…FLRQSEIGKR (2384 aa). 3 N-linked (GlcNAc...) asparagine glycosylation sites follow: asparagine 345, asparagine 380, and asparagine 419. EGF-like domains lie at 514 to 545, 546 to 576, 578 to 610, 611 to 642, 644 to 677, 678 to 709, 710 to 739, and 740 to 783; these read SVVECPRNCHGNGECVSGTCHCFPGFLGPDCS, RAACPVLCSGNGQYSKGRCLCFSGWKGTECD, PTTQCIDPQCGGRGICIMGSCACNSGYKGENCE, EADCLDPGCSNHGVCIHGECHCNPGWGGSNCE, LKTMCADQCSGHGTYLQESGSCTCDPNWTGPDCS, NEICSVDCGSHGVCMGGSCRCEEGWTGPACNQ, RACHPRCAEHGTCKDGKCECSQGWNGEHCT, and IAHY…AGCD. Intrachain disulfides connect cysteine 518-cysteine 528, cysteine 522-cysteine 533, cysteine 535-cysteine 544, cysteine 553-cysteine 564, cysteine 566-cysteine 575, cysteine 582-cysteine 593, cysteine 587-cysteine 598, cysteine 600-cysteine 609, cysteine 614-cysteine 625, cysteine 619-cysteine 630, cysteine 632-cysteine 641, cysteine 652-cysteine 665, cysteine 667-cysteine 676, cysteine 681-cysteine 691, cysteine 685-cysteine 696, cysteine 698-cysteine 707, cysteine 712-cysteine 722, cysteine 716-cysteine 727, cysteine 729-cysteine 738, cysteine 752-cysteine 762, cysteine 756-cysteine 771, and cysteine 773-cysteine 782. Asparagine 670 carries an N-linked (GlcNAc...) asparagine glycan. 2 N-linked (GlcNAc...) asparagine glycosylation sites follow: asparagine 869 and asparagine 892. Residues 1181 to 1209 form an NHL 1 repeat; that stretch reads LLAPVALACGIDGSLYVGDFNYVRRIFPS. A glycan (N-linked (GlcNAc...) asparagine) is linked at asparagine 1211. NHL repeat units follow at residues 1216–1260, 1286–1330, 1347–1387, 1418–1445, and 1474–1517; these read LELR…PKSL, ARCG…NGII, CDTS…ITEN, LESATAIAVSYSGVLYITETDEKKINRI, and CYQS…VSKN. The stretch at 1527–1546 is one YD 1 repeat; the sequence is YEVASPTDQELYIFDINGTH. Residues asparagine 1543 and asparagine 1560 are each glycosylated (N-linked (GlcNAc...) asparagine). YD repeat units lie at residues 1563–1583, 1626–1645, and 1646–1668; these read YSNDNDVTAVTDSNGNTLRIR, YHGNSGLLATKSDETGWTTF, and FDYDSEGRLTNVTFPTGVVTNLH. N-linked (GlcNAc...) asparagine glycosylation is found at asparagine 1656, asparagine 1693, asparagine 1751, and asparagine 1836. 18 YD repeats span residues 1839–1858, 1880–1898, 1899–1919, 1926–1943, 1944–1965, 1966–1983, 1986–2006, 2009–2029, 2037–2056, 2062–2079, 2080–2106, 2108–2121, 2122–2145, 2148–2168, 2169–2189, 2191–2211, 2223–2243, and 2245–2265; these read YSSTGQIASIQRGTTSEKVD, YLEKSMVLLLHSQRQYIFE, YDMWDRLSAITMPSVARHTMQ, YYRNIYNPPESNASIITD, YNEEGLLLQTAFLGTSRRVLFK, YRRQTRLSEILYDSTRVS, YDETAGVLKTVNLQSDGFICT, YRQIGPLIDRQIFRFSEDGMV, YDNSFRVTSMQGVINETPLP, FDDISGKVEQFGKFGVIY, YDINQIISTAVMTYTKHFDAHGRIKEI, YEIFRSLMYWITIQ, YDNMGRVTKREIKIGPFANTTKYA, YDVDGQLQTVYLNEKIMWRYN, YDLNGNLHLLNPSSSARLTPL, YDLRDRITRLGDVQYRLDEDG, YSSKGLLTRVYSKGSGWTVIY, and YDGLGRRVSSKTSLGQHLQFF. N-linked (GlcNAc...) asparagine glycosylation is present at asparagine 1937. A glycan (N-linked (GlcNAc...) asparagine) is linked at asparagine 2140. The N-linked (GlcNAc...) asparagine glycan is linked to asparagine 2280. The stretch at 2291-2332 is one YD 23 repeat; sequence YDLQGHLFAMEISSGDEFYIASDNTGTPLAVFSSNGLMLKQT. N-linked (GlcNAc...) asparagine glycosylation is present at asparagine 2592.

This sequence belongs to the tenascin family. Teneurin subfamily. In terms of assembly, homodimer; disulfide-linked; to mediate homophilic cell adhesion. Most isoforms (isoform-type A and type-B) can mediate homophilic interaction. Heterodimer with either TENM1 or TENM2. May also form heterodimer with TENM4. Isoform A0B0: Does not form homodimer to mediate homophilic cell adhesion. Isoform A0B0: Heterodimer with ADGRL3. In brain, expressed in highly specific regions of the postnatal brain: expressed in restricted domains of the developing hippocampal region, including proximal CA1, distal subiculum, and medial entorhinal cortex (at protein level). Expression matches with topographic connectivity between entorhinal cortex, CA1, and subiculum (at protein level). Also specifically expressed in subregions of the presubiculum, parasubiculum, medial mammillary nucleus and anteroventral thalamic nucleus that are topographically connected with subiculum or entorhinal cortex (at protein level). Expressed in neurons of the developing visual pathway (at protein level). Expressed in the dorsal and ventral lateral geniculate nucleus (dLGN and vLGN) and optic tract at birth. Expressed in ipsilateral retinal axons of terminal zones (TZs) in the developing superior colliculus (SC) throughout the first postnatal week. Expressed in the layer V of the visual caudal cortex. Expressed in the femoral and mandibular condylar cartilages. Strongly expressed in fibrous and proliferating chondrocytes. Poorly expressed in mature chondrocytes. Not expressed in hypertrophic chondrocytes.

The protein resides in the cell membrane. It localises to the cell projection. Its subcellular location is the axon. Involved in neural development by regulating the establishment of proper connectivity within the nervous system. Acts in both pre- and postsynaptic neurons in the hippocampus to control the assembly of a precise topographic projection: required in both CA1 and subicular neurons for the precise targeting of proximal CA1 axons to distal subiculum, probably by promoting homophilic cell adhesion. Promotes homophilic adhesion in a splicing isoform-dependent manner: most isoforms (isoform-type A and type-B) can mediate homophilic interaction. Promotes axon guidance. Required for proper dendrite morphogenesis and axon targeting in the vertebrate visual system, thereby playing a key role in the development of the visual pathway. Regulates the formation in ipsilateral retinal mapping to both the dorsal lateral geniculate nucleus (dLGN) and the superior colliculus (SC). May also be involved in the differentiation of the fibroblast-like cells in the superficial layer of mandibular condylar cartilage into chondrocytes. In Mus musculus (Mouse), this protein is Teneurin-3.